Consider the following 194-residue polypeptide: uncharacterized protein (194 aa).

The segment at 25–156 (PSWACRRGGP…ESPLGTLPCS (132 aa)) is disordered. The segment covering 43-57 (GPSTVPVTPTAGSCQ) has biased composition (polar residues). Residues 104–113 (SSSPGPSFHL) show a composition bias toward low complexity.

This is an uncharacterized protein from Homo sapiens (Human).